Consider the following 231-residue polypeptide: NADH-ubiquinone oxidoreductase chain 4 (231 aa).

6 helical membrane-spanning segments follow: residues 1–21 (PIAGSMVLAAILLKLGGYGII), 34–54 (VFLPFIILALWGAILANLTCL), 61–80 (SLIAYSSISHMGLVVAAIMI), 84–106 (WGLSGAMALMIAHGFTSSALFCL), 118–138 (ILILTRGFHNILPMTSTWWLL), and 169–189 (TIILLGLSMLITASYSLHMFL).

It belongs to the complex I subunit 4 family.

It localises to the mitochondrion membrane. The enzyme catalyses a ubiquinone + NADH + 5 H(+)(in) = a ubiquinol + NAD(+) + 4 H(+)(out). Its function is as follows. Core subunit of the mitochondrial membrane respiratory chain NADH dehydrogenase (Complex I) that is believed to belong to the minimal assembly required for catalysis. Complex I functions in the transfer of electrons from NADH to the respiratory chain. The immediate electron acceptor for the enzyme is believed to be ubiquinone. The chain is NADH-ubiquinone oxidoreductase chain 4 (MT-ND4) from Porthidium nasutum (Hognosed pitviper).